Here is a 644-residue protein sequence, read N- to C-terminus: Sentrin-specific protease 1 (644 aa).

Residues 1 to 200 (MDDIADRMRM…REIYRQLLQM (200 aa)) form an interaction with CCAR2 region. S57, S117, S132, and S157 each carry phosphoserine. A disordered region spans residues 92–117 (QSANGQWRNSTPSSSSSLQKSRNSRS). Residues 99–117 (RNSTPSSSSSLQKSRNSRS) show a composition bias toward low complexity. Disordered stretches follow at residues 156–184 (PSPSWSGSCRRSLLSPKKTQRRHVSTAEE) and 283–312 (SKDSGTLHHPHHHHSVPHQPDNLAASNTQS). The Nuclear localization signal motif lies at 171 to 177 (PKKTQRR). The protease stretch occupies residues 450-613 (LTITRKDIQT…GMFACKYADC (164 aa)). Catalysis depends on residues H533 and D550. The short motif at 574–577 (KKRK) is the Nuclear localization signal element. C603 serves as the catalytic Nucleophile. The Nuclear localization signal signature appears at 628–634 (PYFRKRM). The Nuclear export signal signature appears at 635-644 (VWEILHRKLL).

Belongs to the peptidase C48 family. In terms of assembly, interacts with RBM33; promoting ALKBH5 desumoylation and subsequent activation. In terms of tissue distribution, highly expressed in testis. Expressed at lower levels in thymus, pancreas, spleen, liver, ovary and small intestine.

The protein localises to the nucleus. It is found in the cytoplasm. Its function is as follows. Protease that catalyzes two essential functions in the SUMO pathway. The first is the hydrolysis of an alpha-linked peptide bond at the C-terminal end of the small ubiquitin-like modifier (SUMO) propeptides, SUMO1, SUMO2 and SUMO3 leading to the mature form of the proteins. The second is the deconjugation of SUMO1, SUMO2 and SUMO3 from targeted proteins, by cleaving an epsilon-linked peptide bond between the C-terminal glycine of the mature SUMO and the lysine epsilon-amino group of the target protein. Deconjugates SUMO1 from HIPK2. Deconjugates SUMO1 from HDAC1 and BHLHE40/DEC1, which decreases its transcriptional repression activity. Deconjugates SUMO1 from CLOCK, which decreases its transcriptional activation activity. Deconjugates SUMO2 from MTA1. Inhibits N(6)-methyladenosine (m6A) RNA methylation by mediating SUMO1 deconjugation from METTL3 and ALKBH5: METTL3 inhibits the m6A RNA methyltransferase activity, while ALKBH5 desumoylation promotes m6A demethylation. Desumoylates CCAR2 which decreases its interaction with SIRT1. Deconjugates SUMO1 from GPS2. This chain is Sentrin-specific protease 1 (SENP1), found in Homo sapiens (Human).